Reading from the N-terminus, the 55-residue chain is Large ribosomal subunit protein bL33 (55 aa).

It belongs to the bacterial ribosomal protein bL33 family.

The protein is Large ribosomal subunit protein bL33 of Sodalis glossinidius (strain morsitans).